The chain runs to 147 residues: 3-dehydroquinate dehydratase (147 aa).

The Proton acceptor role is filled by Tyr-23. Substrate is bound by residues Asn-75, His-81, and Asp-88. His-101 serves as the catalytic Proton donor. Substrate-binding positions include 102–103 (LS) and Arg-112.

It belongs to the type-II 3-dehydroquinase family. Homododecamer.

The enzyme catalyses 3-dehydroquinate = 3-dehydroshikimate + H2O. It functions in the pathway metabolic intermediate biosynthesis; chorismate biosynthesis; chorismate from D-erythrose 4-phosphate and phosphoenolpyruvate: step 3/7. Catalyzes a trans-dehydration via an enolate intermediate. The polypeptide is 3-dehydroquinate dehydratase (Hahella chejuensis (strain KCTC 2396)).